A 310-amino-acid polypeptide reads, in one-letter code: Putative olfactory receptor 7A2 (310 aa).

The Extracellular portion of the chain corresponds to 1–26 (MVKAGNETQISEFLLLGFSEKQELQP). Asparagine 6 carries N-linked (GlcNAc...) asparagine glycosylation. The chain crosses the membrane as a helical span at residues 27 to 47 (FLFGLFLSMYLVTVLGNLLII). Topologically, residues 48 to 55 (LAAISDSC) are cytoplasmic. The helical transmembrane segment at 56–76 (LHTPMYFFLSNLSFVDICFAS) threads the bilayer. At 77–100 (TMVPKMLVNIQTQSKVITYAGCIT) the chain is on the extracellular side. Cysteines 98 and 190 form a disulfide. A helical membrane pass occupies residues 101-121 (QMCFFVLFIVLDSLLLTVMAY). The Cytoplasmic portion of the chain corresponds to 122–140 (DQFVAICHPLHYTVIMSPQ). Residues 141 to 161 (LCGLLVLVSWIMSVLNSMLQS) form a helical membrane-spanning segment. At 162–198 (LVTLQLSFCTDLEIPHFFCELNEMIHLACSDTFVNNM) the chain is on the extracellular side. A helical membrane pass occupies residues 199 to 218 (VMHFAAVLLDGGPLVGILYS). Topologically, residues 219-238 (YCRIVSSIRAISSTQGKYKA) are cytoplasmic. Residues 239–259 (LSTCASHLSVVSIFYGTGLGV) traverse the membrane as a helical segment. The Extracellular segment spans residues 260–272 (YLSSTMTQNLHST). Residues 273-293 (AVASVMYTVVTPMLNPFIYSL) form a helical membrane-spanning segment. Residues 294 to 310 (RNKDIKGALTQFFRGKQ) are Cytoplasmic-facing.

Belongs to the G-protein coupled receptor 1 family.

The protein localises to the cell membrane. In terms of biological role, odorant receptor. The sequence is that of Putative olfactory receptor 7A2 (OR7A2P) from Homo sapiens (Human).